A 271-amino-acid chain; its full sequence is Centromere protein K (271 aa).

Coiled coils occupy residues 11-44 (DTITDVEAVIDTEEELIKECEEMWKDMEDCQNKL) and 102-151 (LRCD…VENQ).

The protein belongs to the CENP-K/MCM22 family. Component of the CENPA-CAD complex, composed of CENPI, CENPK, CENPL, CENPO, CENPP, CENPQ, CENPR and CENPS. The CENPA-CAD complex interacts with the CENPA-NAC complex, at least composed of CENPA, CENPC, CENPH, CENPM, CENPN, CENPT and CENPU. May interact with Sox6. Highly expressed in testis.

It localises to the nucleus. Its subcellular location is the chromosome. The protein localises to the centromere. It is found in the kinetochore. Functionally, component of the CENPA-CAD (nucleosome distal) complex, a complex recruited to centromeres which is involved in assembly of kinetochore proteins, mitotic progression and chromosome segregation. May be involved in incorporation of newly synthesized CENPA into centromeres via its interaction with the CENPA-NAC complex. Acts in coordination with KNL1 to recruit the NDC80 complex to the outer kinetochore. The chain is Centromere protein K (Cenpk) from Mus musculus (Mouse).